A 593-amino-acid polypeptide reads, in one-letter code: Metal-response element-binding transcription factor 2 (593 aa).

Residues 1-24 (MRDSTGAGNSLVHKRSPLRRNQKT) are disordered. Residues 12 to 22 (VHKRSPLRRNQ) show a composition bias toward basic residues. Thr-24 carries the post-translational modification Phosphothreonine. Residues 44 to 101 (CKFEEGQDVLARWSDGLFYLGTIKKINILKQSCFIIFEDSSKSWVLWKDIQTGATGSG) enclose the Tudor domain. 2 PHD-type zinc fingers span residues 102-157 (EMVC…CVFA) and 201-255 (QCYC…CSSG). Disordered stretches follow at residues 357 to 410 (VAFK…GPYT) and 444 to 486 (GIAH…TRTG). Lys-360 participates in a covalent cross-link: Glycyl lysine isopeptide (Lys-Gly) (interchain with G-Cter in SUMO2). A compositionally biased stretch (basic and acidic residues) spans 360 to 374 (KAEKEPEGTSHEFKI). The span at 447-470 (HSSNTSDVDLTGASSANETTSASI) shows a compositional bias: polar residues. Ser-452 carries the post-translational modification Phosphoserine. Residue Lys-522 forms a Glycyl lysine isopeptide (Lys-Gly) (interchain with G-Cter in SUMO2) linkage.

This sequence belongs to the Polycomblike family. In terms of assembly, associates with the PRC2 complex, which consists of the core components EED, EZH1 or EZH2, SUZ12, and RBBP4, and various combinations of accessory subunits including AEBP2, JARID2, PHF19, MTF2 and EPOP. Forms a dimeric PRC2.1 (class 1, PRC-PCL) complex consisting of at least SUZ12, RBBP4, and PHF19 or MTF2; PHF19 and MTF2 stabilize the dimeric structure which enhances PRC2 interaction with chromatin.

Its subcellular location is the nucleus. Polycomb group (PcG) protein that specifically binds histone H3 trimethylated at 'Lys-36' (H3K36me3) and recruits the PRC2 complex, thus enhancing PRC2 H3K27me3 methylation activity. Regulates the transcriptional networks during embryonic stem cell self-renewal and differentiation. Promotes recruitment of the PRC2 complex to the inactive X chromosome in differentiating XX ES cells and PRC2 recruitment to target genes in undifferentiated ES cells. Required to repress Hox genes by enhancing H3K27me3 methylation of the PRC2 complex. In some conditions may act as an inhibitor of PRC2 activity: able to activate the CDKN2A gene and promote cellular senescence by suppressing the catalytic activity of the PRC2 complex locally. Binds to the metal-regulating-element (MRE) of MT1A gene promoter. This chain is Metal-response element-binding transcription factor 2 (Mtf2), found in Mus musculus (Mouse).